Reading from the N-terminus, the 571-residue chain is Proline--tRNA ligase (571 aa).

The protein belongs to the class-II aminoacyl-tRNA synthetase family. ProS type 1 subfamily. As to quaternary structure, homodimer.

Its subcellular location is the cytoplasm. The catalysed reaction is tRNA(Pro) + L-proline + ATP = L-prolyl-tRNA(Pro) + AMP + diphosphate. In terms of biological role, catalyzes the attachment of proline to tRNA(Pro) in a two-step reaction: proline is first activated by ATP to form Pro-AMP and then transferred to the acceptor end of tRNA(Pro). As ProRS can inadvertently accommodate and process non-cognate amino acids such as alanine and cysteine, to avoid such errors it has two additional distinct editing activities against alanine. One activity is designated as 'pretransfer' editing and involves the tRNA(Pro)-independent hydrolysis of activated Ala-AMP. The other activity is designated 'posttransfer' editing and involves deacylation of mischarged Ala-tRNA(Pro). The misacylated Cys-tRNA(Pro) is not edited by ProRS. In Aliivibrio fischeri (strain MJ11) (Vibrio fischeri), this protein is Proline--tRNA ligase.